Consider the following 329-residue polypeptide: GTP 3',8-cyclase (329 aa).

Residues 8-234 (AFARKFYYLR…QIRQRSDGPA (227 aa)) enclose the Radical SAM core domain. A GTP-binding site is contributed by Arg17. [4Fe-4S] cluster contacts are provided by Cys24 and Cys28. Tyr30 contributes to the S-adenosyl-L-methionine binding site. Cys31 provides a ligand contact to [4Fe-4S] cluster. Arg68 contacts GTP. Residue Gly72 coordinates S-adenosyl-L-methionine. Residue Thr99 participates in GTP binding. S-adenosyl-L-methionine is bound at residue Ser123. Lys160 provides a ligand contact to GTP. S-adenosyl-L-methionine is bound at residue Met194. [4Fe-4S] cluster-binding residues include Cys257 and Cys260. GTP is bound at residue 262-264 (RLR). A [4Fe-4S] cluster-binding site is contributed by Cys274.

Belongs to the radical SAM superfamily. MoaA family. As to quaternary structure, monomer and homodimer. [4Fe-4S] cluster is required as a cofactor.

The enzyme catalyses GTP + AH2 + S-adenosyl-L-methionine = (8S)-3',8-cyclo-7,8-dihydroguanosine 5'-triphosphate + 5'-deoxyadenosine + L-methionine + A + H(+). The protein operates within cofactor biosynthesis; molybdopterin biosynthesis. In terms of biological role, catalyzes the cyclization of GTP to (8S)-3',8-cyclo-7,8-dihydroguanosine 5'-triphosphate. This chain is GTP 3',8-cyclase, found in Klebsiella pneumoniae subsp. pneumoniae (strain ATCC 700721 / MGH 78578).